Here is a 202-residue protein sequence, read N- to C-terminus: Large ribosomal subunit protein bL25 (202 aa).

Positions 182 to 202 are disordered; that stretch reads QTAPEEEEGTAAETTEPELAE. Over residues 185 to 202 the composition is skewed to acidic residues; it reads PEEEEGTAAETTEPELAE.

It belongs to the bacterial ribosomal protein bL25 family. CTC subfamily. Part of the 50S ribosomal subunit; part of the 5S rRNA/L5/L18/L25 subcomplex. Contacts the 5S rRNA. Binds to the 5S rRNA independently of L5 and L18.

In terms of biological role, this is one of the proteins that binds to the 5S RNA in the ribosome where it forms part of the central protuberance. This Enterococcus faecalis (strain ATCC 700802 / V583) protein is Large ribosomal subunit protein bL25.